The sequence spans 257 residues: UPF0246 protein Sputcn32_1053 (257 aa).

The protein belongs to the UPF0246 family.

The polypeptide is UPF0246 protein Sputcn32_1053 (Shewanella putrefaciens (strain CN-32 / ATCC BAA-453)).